A 396-amino-acid chain; its full sequence is MTSQNPIFIPGPTNIPEEMRKAVDMPTIDHRSPVFGRMLHPALEGVKKVLKTTQAQVFLFPSTGTGGWETAITNTLSPGDKVLAARNGMFSHRWIDMCQRHGLDVTFVETPWGEGVPADRFEEILTADKGHEIRVVLATHNETATGVKSDIAAVRRALDAAKHPALLFVDGVSSIGSMDFRMDEWGVDIAVTGSQKGFMLPPGLAIVGFSPKAMEAVETARLPRTFFDIRDMATGYARNGYPYTPPVGLINGLNASCERILAEGLENVFARHHRIASGVRAAVDAWGLKLCAVRPELYSDSVSAIRVPEGFDANLIVSHALETYDMAFGTGLGQVAGKVFRIGHLGSLTDAMALSGIATAEMVMADLGLPIQLGSGVAAAQEHYRQTTAAAQKKAA.

Lys196 is subject to N6-(pyridoxal phosphate)lysine.

It belongs to the class-V pyridoxal-phosphate-dependent aminotransferase family. The cofactor is pyridoxal 5'-phosphate.

It catalyses the reaction oxaloacetate + glycine = glyoxylate + L-aspartate. Catalyzes the transamination of glyoxylate into glycine using L-aspartate as the preferred amino group donor. Is essential for the growth of P.denitrificans in the presence of glycolate and glyoxylate since it functions in glyoxylate assimilation via the beta-hydroxyaspartate cycle (BHAC). Can catalyze the reverse reaction in vitro, and also use L-serine and L-glutamate as amino group donor, but with much less efficiency than L-aspartate. This chain is L-aspartate--glyoxylate aminotransferase, found in Paracoccus denitrificans (strain Pd 1222).